The primary structure comprises 426 residues: Enolase (426 aa).

(2R)-2-phosphoglycerate is bound at residue Q163. Residue E205 is the Proton donor of the active site. Residues D242, E286, and D313 each contribute to the Mg(2+) site. (2R)-2-phosphoglycerate is bound by residues K338, R367, S368, and K389. Catalysis depends on K338, which acts as the Proton acceptor.

Belongs to the enolase family. Mg(2+) is required as a cofactor.

It localises to the cytoplasm. The protein resides in the secreted. The protein localises to the cell surface. The catalysed reaction is (2R)-2-phosphoglycerate = phosphoenolpyruvate + H2O. The protein operates within carbohydrate degradation; glycolysis; pyruvate from D-glyceraldehyde 3-phosphate: step 4/5. Functionally, catalyzes the reversible conversion of 2-phosphoglycerate (2-PG) into phosphoenolpyruvate (PEP). It is essential for the degradation of carbohydrates via glycolysis. The protein is Enolase of Gemmatimonas aurantiaca (strain DSM 14586 / JCM 11422 / NBRC 100505 / T-27).